A 1110-amino-acid chain; its full sequence is Isoleucine--tRNA ligase (1110 aa).

Positions 47–57 (PSANGTPGIHH) match the 'HIGH' region motif. Positions 658–662 (KMSKR) match the 'KMSKS' region motif. Residue lysine 661 participates in ATP binding.

Belongs to the class-I aminoacyl-tRNA synthetase family. IleS type 2 subfamily. In terms of assembly, monomer. It depends on Zn(2+) as a cofactor.

The protein localises to the cytoplasm. It carries out the reaction tRNA(Ile) + L-isoleucine + ATP = L-isoleucyl-tRNA(Ile) + AMP + diphosphate. Its function is as follows. Catalyzes the attachment of isoleucine to tRNA(Ile). As IleRS can inadvertently accommodate and process structurally similar amino acids such as valine, to avoid such errors it has two additional distinct tRNA(Ile)-dependent editing activities. One activity is designated as 'pretransfer' editing and involves the hydrolysis of activated Val-AMP. The other activity is designated 'posttransfer' editing and involves deacylation of mischarged Val-tRNA(Ile). This Cytophaga hutchinsonii (strain ATCC 33406 / DSM 1761 / CIP 103989 / NBRC 15051 / NCIMB 9469 / D465) protein is Isoleucine--tRNA ligase.